Here is a 352-residue protein sequence, read N- to C-terminus: MHQMISIFLFLTVVSGTIIVVSAENWFVIWLGLELSTLALIPILWFCFTPRNIEATIKYFLVQAFSAALLLNSALIQAWFSGSWSALIPMESFPSLCLSVALAFNLGLAACHFWLPDVLQGLPFIQGLIIATWQKIAPLFLLFYFNQLNFSYFIILAALISILVGGWGGLNQTQTRKILAFSSIGNMGWIVVTSAFSLGTAAMMLFIYLVINTSIFLILDFLSIFTLGHLNNTSQLSPISITLVILTILSLGGLPPLTGFILKFSSLYSLINNGFIFFSSVMIIGSLLSLFFYLRIAFNTTLILFPQHLISLTAWRNSTEAEPLMAKTWLVSSFSVLSILAIPLTIPLYINV.

Transmembrane regions (helical) follow at residues 4–24 (MISI…VSAE), 26–46 (WFVI…ILWF), 60–80 (FLVQ…QAWF), 96–116 (LCLS…FWLP), 124–144 (FIQG…LLFY), 150–170 (FSYF…WGGL), 178–198 (ILAF…AFSL), 205–225 (LFIY…LSIF), 241–261 (ITLV…TGFI), 274–294 (GFIF…FFYL), and 330–350 (LVSS…PLYI).

Belongs to the complex I subunit 2 family.

The protein resides in the mitochondrion inner membrane. It catalyses the reaction a ubiquinone + NADH + 5 H(+)(in) = a ubiquinol + NAD(+) + 4 H(+)(out). Core subunit of the mitochondrial membrane respiratory chain NADH dehydrogenase (Complex I) that is believed to belong to the minimal assembly required for catalysis. Complex I functions in the transfer of electrons from NADH to the respiratory chain. The immediate electron acceptor for the enzyme is believed to be ubiquinone. The polypeptide is NADH-ubiquinone oxidoreductase chain 2 (ND2) (Paracentrotus lividus (Common sea urchin)).